Here is a 95-residue protein sequence, read N- to C-terminus: MSDNDSRKNLRMPEEDEVFAVVMDMLGANRVKVRCMDGVERTARIPGKMQKRIWIREDDVVLVEPWDWQDEKADITWRYEKQDADQLREEGHIQE.

One can recognise an S1-like domain in the interval 6–80 (SRKNLRMPEE…EKADITWRYE (75 aa)).

Belongs to the eIF-1A family.

Its function is as follows. Seems to be required for maximal rate of protein biosynthesis. Enhances ribosome dissociation into subunits and stabilizes the binding of the initiator Met-tRNA(I) to 40 S ribosomal subunits. The chain is Translation initiation factor 1A from Haloarcula marismortui (strain ATCC 43049 / DSM 3752 / JCM 8966 / VKM B-1809) (Halobacterium marismortui).